A 689-amino-acid polypeptide reads, in one-letter code: Glycine--tRNA ligase beta subunit (689 aa).

The protein belongs to the class-II aminoacyl-tRNA synthetase family. As to quaternary structure, tetramer of two alpha and two beta subunits.

The protein resides in the cytoplasm. The catalysed reaction is tRNA(Gly) + glycine + ATP = glycyl-tRNA(Gly) + AMP + diphosphate. The sequence is that of Glycine--tRNA ligase beta subunit (glyS) from Pasteurella multocida (strain Pm70).